A 156-amino-acid polypeptide reads, in one-letter code: Small ribosomal subunit protein uS7 (156 aa).

Belongs to the universal ribosomal protein uS7 family. As to quaternary structure, part of the 30S ribosomal subunit. Contacts proteins S9 and S11.

Its function is as follows. One of the primary rRNA binding proteins, it binds directly to 16S rRNA where it nucleates assembly of the head domain of the 30S subunit. Is located at the subunit interface close to the decoding center, probably blocks exit of the E-site tRNA. The sequence is that of Small ribosomal subunit protein uS7 from Lawsonia intracellularis (strain PHE/MN1-00).